The chain runs to 140 residues: 3-hydroxyacyl-[acyl-carrier-protein] dehydratase FabZ (140 aa).

His-48 is a catalytic residue.

The protein belongs to the thioester dehydratase family. FabZ subfamily.

The protein resides in the cytoplasm. It catalyses the reaction a (3R)-hydroxyacyl-[ACP] = a (2E)-enoyl-[ACP] + H2O. Its function is as follows. Involved in unsaturated fatty acids biosynthesis. Catalyzes the dehydration of short chain beta-hydroxyacyl-ACPs and long chain saturated and unsaturated beta-hydroxyacyl-ACPs. The protein is 3-hydroxyacyl-[acyl-carrier-protein] dehydratase FabZ of Exiguobacterium sibiricum (strain DSM 17290 / CCUG 55495 / CIP 109462 / JCM 13490 / 255-15).